Here is a 247-residue protein sequence, read N- to C-terminus: Agamous-like MADS-box protein AGL28 (247 aa).

The MADS-box domain occupies 6–66 (LGRRKIELVK…GKAYSFGHPN (61 aa)). Residues 91-168 (TKLRIQMLNE…VDEKVAQLHH (78 aa)) adopt a coiled-coil conformation.

In terms of tissue distribution, expressed in roots, leaves and shoot apices.

Its subcellular location is the nucleus. Probable transcription factor that may function as a floral promoter operating upstream of known floral activators in the autonomous pathway. The protein is Agamous-like MADS-box protein AGL28 of Arabidopsis thaliana (Mouse-ear cress).